A 101-amino-acid polypeptide reads, in one-letter code: Small ribosomal subunit protein uS14 (101 aa).

It belongs to the universal ribosomal protein uS14 family. Part of the 30S ribosomal subunit. Contacts proteins S3 and S10.

Its function is as follows. Binds 16S rRNA, required for the assembly of 30S particles and may also be responsible for determining the conformation of the 16S rRNA at the A site. In Salmonella paratyphi A (strain ATCC 9150 / SARB42), this protein is Small ribosomal subunit protein uS14.